An 80-amino-acid chain; its full sequence is Serine protease inhibitor Kazal-type 1 (80 aa).

An N-terminal signal peptide occupies residues 1–23 (MKVAVIFLLSALALLSLAGNTFS). The region spanning 27-80 (TGKEASCHDAVAGCPRIYDPVCGTDGITYANECVLCFENRKRIEPVLIRKGGPC) is the Kazal-like domain. 3 disulfide bridges follow: cysteine 33-cysteine 62, cysteine 40-cysteine 59, and cysteine 48-cysteine 80.

In the genital tract, expressed only in male accessory glands including seminal vesicle, coagulating gland and prostate.

It localises to the secreted. Functionally, serine protease inhibitor which exhibits anti-trypsin activity. In the pancreas, protects against trypsin-catalyzed premature activation of zymogens. In the male reproductive tract, binds to sperm heads where it modulates sperm capacitance by inhibiting calcium uptake and nitrogen oxide (NO) production. In Mus musculus (Mouse), this protein is Serine protease inhibitor Kazal-type 1.